The sequence spans 457 residues: Eukaryotic peptide chain release factor subunit 1 (457 aa).

This sequence belongs to the eukaryotic release factor 1 family. In terms of assembly, heterodimer of two subunits, one of which binds GTP.

The protein localises to the cytoplasm. Functionally, directs the termination of nascent peptide synthesis (translation) in response to the termination codons UAA, UAG and UGA. The protein is Eukaryotic peptide chain release factor subunit 1 (ERF1) of Giardia intestinalis (Giardia lamblia).